Consider the following 239-residue polypeptide: Large ribosomal subunit protein uL3 (239 aa).

Glutamine 151 bears the N5-methylglutamine mark.

It belongs to the universal ribosomal protein uL3 family. As to quaternary structure, part of the 50S ribosomal subunit. Forms a cluster with proteins L14 and L19. In terms of processing, methylated by PrmB.

One of the primary rRNA binding proteins, it binds directly near the 3'-end of the 23S rRNA, where it nucleates assembly of the 50S subunit. The sequence is that of Large ribosomal subunit protein uL3 from Ruegeria sp. (strain TM1040) (Silicibacter sp.).